The primary structure comprises 398 residues: Na(+)/H(+) antiporter NhaA (398 aa).

11 helical membrane passes run 14–34 (AAGVMLMMATVLALTFANWSV), 60–80 (LLLWINDGLMAIFFLLIGLEV), 96–116 (MLPLAAAVGGMVFPALFFLLF), 125–145 (VGWAIPAATDIAFAIGVLTLL), 155–175 (VFLLALAIIDDLGAILIIALF), 179–199 (QIFWPALGGAVLAVAALAYLN), 214–234 (IVLWVCILKCGVHATLAGVIV), 263–283 (FLIIPLFAFANAGIVLQGIVL), 292–312 (LGIAAGLLVGKPLGITLLSWL), 330–350 (IVAVSVLCGIGFTMSIFITLL), and 362–382 (YAKLGILLASGLAALLGYLAL).

The protein belongs to the NhaA Na(+)/H(+) (TC 2.A.33) antiporter family.

The protein resides in the cell inner membrane. It carries out the reaction Na(+)(in) + 2 H(+)(out) = Na(+)(out) + 2 H(+)(in). Its function is as follows. Na(+)/H(+) antiporter that extrudes sodium in exchange for external protons. This is Na(+)/H(+) antiporter NhaA from Pectobacterium carotovorum subsp. carotovorum (strain PC1).